Consider the following 251-residue polypeptide: Coproheme decarboxylase (251 aa).

Residues arginine 133, 147 to 151 (YPMSK), histidine 174, glutamine 187, and serine 225 each bind Fe-coproporphyrin III. Tyrosine 147 is an active-site residue.

Belongs to the ChdC family. Type 1 subfamily. Fe-coproporphyrin III serves as cofactor.

The catalysed reaction is Fe-coproporphyrin III + 2 H2O2 + 2 H(+) = heme b + 2 CO2 + 4 H2O. The enzyme catalyses Fe-coproporphyrin III + H2O2 + H(+) = harderoheme III + CO2 + 2 H2O. It catalyses the reaction harderoheme III + H2O2 + H(+) = heme b + CO2 + 2 H2O. It functions in the pathway porphyrin-containing compound metabolism; protoheme biosynthesis. Its function is as follows. Involved in coproporphyrin-dependent heme b biosynthesis. Catalyzes the decarboxylation of Fe-coproporphyrin III (coproheme) to heme b (protoheme IX), the last step of the pathway. The reaction occurs in a stepwise manner with a three-propionate intermediate. The chain is Coproheme decarboxylase from Listeria innocua serovar 6a (strain ATCC BAA-680 / CLIP 11262).